A 182-amino-acid chain; its full sequence is Ribosome-recycling factor (182 aa).

Belongs to the RRF family.

The protein resides in the cytoplasm. Responsible for the release of ribosomes from messenger RNA at the termination of protein biosynthesis. May increase the efficiency of translation by recycling ribosomes from one round of translation to another. The chain is Ribosome-recycling factor from Thermosynechococcus vestitus (strain NIES-2133 / IAM M-273 / BP-1).